Reading from the N-terminus, the 201-residue chain is NADH-quinone oxidoreductase subunit C (201 aa).

The protein belongs to the complex I 30 kDa subunit family. In terms of assembly, NDH-1 is composed of 14 different subunits. Subunits NuoB, C, D, E, F, and G constitute the peripheral sector of the complex.

It is found in the cell inner membrane. The enzyme catalyses a quinone + NADH + 5 H(+)(in) = a quinol + NAD(+) + 4 H(+)(out). Its function is as follows. NDH-1 shuttles electrons from NADH, via FMN and iron-sulfur (Fe-S) centers, to quinones in the respiratory chain. The immediate electron acceptor for the enzyme in this species is believed to be ubiquinone. Couples the redox reaction to proton translocation (for every two electrons transferred, four hydrogen ions are translocated across the cytoplasmic membrane), and thus conserves the redox energy in a proton gradient. This is NADH-quinone oxidoreductase subunit C from Mesorhizobium japonicum (strain LMG 29417 / CECT 9101 / MAFF 303099) (Mesorhizobium loti (strain MAFF 303099)).